We begin with the raw amino-acid sequence, 401 residues long: Divinyl chlorophyllide a 8-vinyl-reductase, chloroplastic (401 aa).

Residues 1-10 (MATILLSSRL) show a composition bias toward polar residues. The tract at residues 1-26 (MATILLSSRLPTTGTATPSPTRPAPR) is disordered. A chloroplast-targeting transit peptide spans 1–54 (MATILLSSRLPTTGTATPSPTRPAPRFLSFPGTAIRRRGRGPLLASSAVSPPAP).

The protein localises to the plastid. It is found in the chloroplast. The catalysed reaction is protochlorophyllide a + NADP(+) = 3,8-divinyl protochlorophyllide a + NADPH + H(+). The protein operates within porphyrin-containing compound metabolism; chlorophyll biosynthesis. Its function is as follows. Catalyzes the conversion of divinyl chlorophyllide to monovinyl chlorophyllide. Reduces the 8-vinyl group of the tetrapyrrole to an ethyl group using NADPH as the reductant. Can use (3,8-divinyl)-chlorophyllide a (DV-Chlidea) &gt; (3,8-divinyl)-chlorophyll a (DV-Chla) &gt; (3,8-divinyl)-protochlorophyllide a (DV-Pchlidea) &gt; (3,8-divinyl)-magnesium-protoporphyrin IX monomethyl ester (DV-MPE) &gt; (3,8-divinyl)-magnesium-protoporphyrin IX (DV-Mg-Proto) as substrates. The protein is Divinyl chlorophyllide a 8-vinyl-reductase, chloroplastic (DVR) of Zea mays (Maize).